A 255-amino-acid chain; its full sequence is Imidazole glycerol phosphate synthase subunit HisF (255 aa).

Active-site residues include Asp-12 and Asp-131.

The protein belongs to the HisA/HisF family. In terms of assembly, heterodimer of HisH and HisF.

Its subcellular location is the cytoplasm. The enzyme catalyses 5-[(5-phospho-1-deoxy-D-ribulos-1-ylimino)methylamino]-1-(5-phospho-beta-D-ribosyl)imidazole-4-carboxamide + L-glutamine = D-erythro-1-(imidazol-4-yl)glycerol 3-phosphate + 5-amino-1-(5-phospho-beta-D-ribosyl)imidazole-4-carboxamide + L-glutamate + H(+). Its pathway is amino-acid biosynthesis; L-histidine biosynthesis; L-histidine from 5-phospho-alpha-D-ribose 1-diphosphate: step 5/9. IGPS catalyzes the conversion of PRFAR and glutamine to IGP, AICAR and glutamate. The HisF subunit catalyzes the cyclization activity that produces IGP and AICAR from PRFAR using the ammonia provided by the HisH subunit. The sequence is that of Imidazole glycerol phosphate synthase subunit HisF from Salinispora tropica (strain ATCC BAA-916 / DSM 44818 / JCM 13857 / NBRC 105044 / CNB-440).